The following is a 206-amino-acid chain: Small ribosomal subunit protein uS4 (206 aa).

The region spanning 96–156 (TRLDNVVYRM…EKSKKQARII (61 aa)) is the S4 RNA-binding domain.

This sequence belongs to the universal ribosomal protein uS4 family. As to quaternary structure, part of the 30S ribosomal subunit. Contacts protein S5. The interaction surface between S4 and S5 is involved in control of translational fidelity.

In terms of biological role, one of the primary rRNA binding proteins, it binds directly to 16S rRNA where it nucleates assembly of the body of the 30S subunit. With S5 and S12 plays an important role in translational accuracy. This Shewanella woodyi (strain ATCC 51908 / MS32) protein is Small ribosomal subunit protein uS4.